The sequence spans 348 residues: S-adenosylmethionine:tRNA ribosyltransferase-isomerase (348 aa).

It belongs to the QueA family. In terms of assembly, monomer.

It localises to the cytoplasm. It catalyses the reaction 7-aminomethyl-7-carbaguanosine(34) in tRNA + S-adenosyl-L-methionine = epoxyqueuosine(34) in tRNA + adenine + L-methionine + 2 H(+). Its pathway is tRNA modification; tRNA-queuosine biosynthesis. Its function is as follows. Transfers and isomerizes the ribose moiety from AdoMet to the 7-aminomethyl group of 7-deazaguanine (preQ1-tRNA) to give epoxyqueuosine (oQ-tRNA). The sequence is that of S-adenosylmethionine:tRNA ribosyltransferase-isomerase from Polynucleobacter asymbioticus (strain DSM 18221 / CIP 109841 / QLW-P1DMWA-1) (Polynucleobacter necessarius subsp. asymbioticus).